The primary structure comprises 954 residues: Isoleucine--tRNA ligase (954 aa).

A 'HIGH' region motif is present at residues 60 to 70 (PYANGALHMGH). Glu564 is an L-isoleucyl-5'-AMP binding site. The 'KMSKS' region motif lies at 605–609 (KMSKS). Lys608 contacts ATP. Positions 923, 926, 943, and 946 each coordinate Zn(2+).

It belongs to the class-I aminoacyl-tRNA synthetase family. IleS type 1 subfamily. As to quaternary structure, monomer. Zn(2+) is required as a cofactor.

It localises to the cytoplasm. It carries out the reaction tRNA(Ile) + L-isoleucine + ATP = L-isoleucyl-tRNA(Ile) + AMP + diphosphate. Catalyzes the attachment of isoleucine to tRNA(Ile). As IleRS can inadvertently accommodate and process structurally similar amino acids such as valine, to avoid such errors it has two additional distinct tRNA(Ile)-dependent editing activities. One activity is designated as 'pretransfer' editing and involves the hydrolysis of activated Val-AMP. The other activity is designated 'posttransfer' editing and involves deacylation of mischarged Val-tRNA(Ile). The chain is Isoleucine--tRNA ligase from Synechococcus sp. (strain ATCC 27144 / PCC 6301 / SAUG 1402/1) (Anacystis nidulans).